The chain runs to 335 residues: MLGSKPRVHLYILPCASQQVSTMGDRGTSNHSEMTDFILAGFRVRPELHILLFLLFLFVYAMILLGNVGMMTIIMTDPRLNTPMYFFLGNLSFIDLFYSSVIEPKAMINFWSENKSISFAGCVAQLFLFALLIVTEGFLLAAMAYDRFIAICNPLLYSVQMSTRLCTQLVAGSYFCGCISSVIQTSMTFTLSFCASRAVDHFYCDSRPLQRLSCSDLFIHRMISFSLSCIIILPTIIVIIVSYMYIVSTVLKIHSTEGHKKAFSTCSSHLGVVSVLYGAVFFMYLTPDRFPELSKVASLCYSLVTPMLNPLIYSLRNKDVQEALKKFLEKKNIIL.

The Extracellular portion of the chain corresponds to 1 to 50 (MLGSKPRVHLYILPCASQQVSTMGDRGTSNHSEMTDFILAGFRVRPELHI). Asn-30 is a glycosylation site (N-linked (GlcNAc...) asparagine). A helical transmembrane segment spans residues 51–71 (LLFLLFLFVYAMILLGNVGMM). At 72 to 79 (TIIMTDPR) the chain is on the cytoplasmic side. A helical transmembrane segment spans residues 80–100 (LNTPMYFFLGNLSFIDLFYSS). Residues 101–124 (VIEPKAMINFWSENKSISFAGCVA) lie on the Extracellular side of the membrane. Asn-114 carries an N-linked (GlcNAc...) asparagine glycan. A disulfide bridge links Cys-122 with Cys-214. The chain crosses the membrane as a helical span at residues 125–145 (QLFLFALLIVTEGFLLAAMAY). The Cytoplasmic portion of the chain corresponds to 146–164 (DRFIAICNPLLYSVQMSTR). Residues 165-185 (LCTQLVAGSYFCGCISSVIQT) traverse the membrane as a helical segment. The Extracellular segment spans residues 186-222 (SMTFTLSFCASRAVDHFYCDSRPLQRLSCSDLFIHRM). The chain crosses the membrane as a helical span at residues 223–242 (ISFSLSCIIILPTIIVIIVS). Over 243–262 (YMYIVSTVLKIHSTEGHKKA) the chain is Cytoplasmic. The chain crosses the membrane as a helical span at residues 263–283 (FSTCSSHLGVVSVLYGAVFFM). At 284 to 296 (YLTPDRFPELSKV) the chain is on the extracellular side. The Cytoplasmic segment spans residues 316-335 (RNKDVQEALKKFLEKKNIIL).

Belongs to the G-protein coupled receptor 1 family.

The protein localises to the cell membrane. Functionally, odorant receptor. The polypeptide is Olfactory receptor 9K2 (OR9K2) (Homo sapiens (Human)).